We begin with the raw amino-acid sequence, 101 residues long: MIPGEIIAASGDIELNAGAPTVTLEVSNTGDRPVQVGSHYHFAETNAGLSFDRAAAHGKRLDIPSGTAVRFEPGQTRSVTLIPLAGKREVYGFRQLVMGKL.

This sequence belongs to the urease beta subunit family. As to quaternary structure, heterotrimer of UreA (gamma), UreB (beta) and UreC (alpha) subunits. Three heterotrimers associate to form the active enzyme.

The protein localises to the cytoplasm. The catalysed reaction is urea + 2 H2O + H(+) = hydrogencarbonate + 2 NH4(+). The protein operates within nitrogen metabolism; urea degradation; CO(2) and NH(3) from urea (urease route): step 1/1. This is Urease subunit beta from Rhizobium etli (strain CIAT 652).